A 196-amino-acid chain; its full sequence is DnaA initiator-associating protein DiaA (196 aa).

Positions 34 to 196 (LVQSLLNGNK…DNTLFPHQDD (163 aa)) constitute an SIS domain.

This sequence belongs to the SIS family. DiaA subfamily. As to quaternary structure, homotetramer; dimer of dimers.

Functionally, required for the timely initiation of chromosomal replication via direct interactions with the DnaA initiator protein. The polypeptide is DnaA initiator-associating protein DiaA (Yersinia pseudotuberculosis serotype O:1b (strain IP 31758)).